A 41-amino-acid chain; its full sequence is Ranatuerin-2PLg (41 aa).

Positions 1–11 (DDGVEMTEEEV) are excised as a propeptide. Residues C36 and C41 are joined by a disulfide bond.

Belongs to the frog skin active peptide (FSAP) family. Ranatuerin subfamily.

Its subcellular location is the secreted. Antimicrobial peptide. This chain is Ranatuerin-2PLg, found in Lithobates palustris (Pickerel frog).